Here is a 431-residue protein sequence, read N- to C-terminus: Glutamyl-tRNA(Gln) amidotransferase subunit A (431 aa).

Residues Lys55 and Ser130 each act as charge relay system in the active site. Catalysis depends on Ser154, which acts as the Acyl-ester intermediate.

This sequence belongs to the amidase family. GatA subfamily. Heterotrimer of A, B and C subunits.

The catalysed reaction is L-glutamyl-tRNA(Gln) + L-glutamine + ATP + H2O = L-glutaminyl-tRNA(Gln) + L-glutamate + ADP + phosphate + H(+). Functionally, allows the formation of correctly charged Gln-tRNA(Gln) through the transamidation of misacylated Glu-tRNA(Gln) in organisms which lack glutaminyl-tRNA synthetase. The reaction takes place in the presence of glutamine and ATP through an activated gamma-phospho-Glu-tRNA(Gln). This Methanococcus maripaludis (strain C7 / ATCC BAA-1331) protein is Glutamyl-tRNA(Gln) amidotransferase subunit A.